A 214-amino-acid chain; its full sequence is N-(5'-phosphoribosyl)anthranilate isomerase (214 aa).

It belongs to the TrpF family.

It catalyses the reaction N-(5-phospho-beta-D-ribosyl)anthranilate = 1-(2-carboxyphenylamino)-1-deoxy-D-ribulose 5-phosphate. It functions in the pathway amino-acid biosynthesis; L-tryptophan biosynthesis; L-tryptophan from chorismate: step 3/5. This chain is N-(5'-phosphoribosyl)anthranilate isomerase, found in Rhodospirillum centenum (strain ATCC 51521 / SW).